The chain runs to 288 residues: Octanoyl-[GcvH]:protein N-octanoyltransferase (288 aa).

The 210-residue stretch at 44 to 253 (AGGPPTFRLW…VLESAMGPQV (210 aa)) folds into the BPL/LPL catalytic domain. The Acyl-thioester intermediate role is filled by Cys148. Positions 269 to 288 (GREGASETDPRRVAYGVDRP) are disordered. Basic and acidic residues predominate over residues 272–288 (GASETDPRRVAYGVDRP).

Belongs to the octanoyltransferase LipL family.

The catalysed reaction is N(6)-octanoyl-L-lysyl-[glycine-cleavage complex H protein] + L-lysyl-[lipoyl-carrier protein] = N(6)-octanoyl-L-lysyl-[lipoyl-carrier protein] + L-lysyl-[glycine-cleavage complex H protein]. Its pathway is protein modification; protein lipoylation via endogenous pathway; protein N(6)-(lipoyl)lysine from octanoyl-[acyl-carrier-protein]. Catalyzes the amidotransfer (transamidation) of the octanoyl moiety from octanoyl-GcvH to the lipoyl domain of the E2 subunit of lipoate-dependent enzymes. The sequence is that of Octanoyl-[GcvH]:protein N-octanoyltransferase from Kyrpidia tusciae (strain DSM 2912 / NBRC 15312 / T2) (Bacillus tusciae).